Reading from the N-terminus, the 662-residue chain is p-hydroxybenzoic acid efflux pump subunit AaeB (662 aa).

The next 11 membrane-spanning stretches (helical) occupy residues 22-42 (FAFKLSFAIVLSLFLGFHLQL), 52-72 (AAIVAAGPAFAAGGEPFSGAI), 76-96 (GMLRIIGTFIGCIGALVIIIA), 102-122 (VVMLMLCCIWAGLCTWVSSLV), 129-149 (IFGLAGYTALIIIVSTQGTPL), 161-181 (EIVLGIVCAILADLLFSPRSI), 378-398 (LFWLSTGWTSGSVCMVMIAVV), 415-435 (FLFGTIYALPLGALMFMFIMP), 439-459 (QSMLLLCLSLGGMAFFLGLEV), 465-485 (GSLGALASTINILVLDNPMTF), and 491-511 (LDSAIGQIIGCFLALMVIMLI).

This sequence belongs to the aromatic acid exporter ArAE (TC 2.A.85) family.

It localises to the cell inner membrane. Functionally, forms an efflux pump with AaeA. Could function as a metabolic relief valve, allowing to eliminate certain compounds when they accumulate to high levels in the cell. The polypeptide is p-hydroxybenzoic acid efflux pump subunit AaeB (Pectobacterium atrosepticum (strain SCRI 1043 / ATCC BAA-672) (Erwinia carotovora subsp. atroseptica)).